The chain runs to 876 residues: Leucine--tRNA ligase (876 aa).

The 'HIGH' region signature appears at 43 to 53; that stretch reads PYPSGRIHMGH. A 'KMSKS' region motif is present at residues 632–636; that stretch reads KMSKS. Position 635 (Lys-635) interacts with ATP.

Belongs to the class-I aminoacyl-tRNA synthetase family.

The protein resides in the cytoplasm. It catalyses the reaction tRNA(Leu) + L-leucine + ATP = L-leucyl-tRNA(Leu) + AMP + diphosphate. The protein is Leucine--tRNA ligase of Rhizobium etli (strain ATCC 51251 / DSM 11541 / JCM 21823 / NBRC 15573 / CFN 42).